Consider the following 199-residue polypeptide: Single-stranded DNA-binding protein 2 (199 aa).

In terms of domain architecture, SSB spans 1-110 (MAGETVITVV…LDVDEVGASL (110 aa)). The segment at 114–199 (TAKVTKTSGQ…GGGYSDEPPF (86 aa)) is disordered. Positions 123–156 (QGRGGQGGYGGGGGGQGGGGWGGGPGGGQQGGGA) are enriched in gly residues. Low complexity predominate over residues 157–166 (PADDPWATGG). Over residues 167–193 (APAGGQQGGGGQGGGGWGGGSGGGGGY) the composition is skewed to gly residues.

In terms of assembly, homotetramer. Phosphorylated on tyrosine residue(s) when expressed in E.coli.

The protein localises to the cytoplasm. It is found in the nucleoid. The chain is Single-stranded DNA-binding protein 2 (ssb2) from Streptomyces coelicolor (strain ATCC BAA-471 / A3(2) / M145).